A 95-amino-acid polypeptide reads, in one-letter code: Auxin-responsive protein SAUR27 (95 aa).

It belongs to the ARG7 family. As to quaternary structure, interacts with PP2C-D1. Higher expression in thermo-responsive cultivars (e.g. cv. Alst-1, cv. Ang-0 and cv. Com-0) than in low thermo-responsive cultivars (e.g. cv. Dja-1, cv. El-0 and cv. Kon).

Its subcellular location is the cell membrane. Its function is as follows. Functions as a positive effector of cell expansion through modulation of auxin transport. Involved in thermo-responsiveness of plant architecture. Enhances plasma membrane H(+)-ATPase. The protein is Auxin-responsive protein SAUR27 of Arabidopsis thaliana (Mouse-ear cress).